A 421-amino-acid polypeptide reads, in one-letter code: Succinate--CoA ligase [ADP-forming] subunit beta, mitochondrial (421 aa).

The N-terminal 26 residues, 1–26 (MRGLVNKLVSRSLSISGKWQNQQLRR), are a transit peptide targeting the mitochondrion. In terms of domain architecture, ATP-grasp spans 35 to 278 (AELMGKYGVN…PTQEDPREVA (244 aa)). ATP is bound by residues Lys74, 81–83 (GRG), and Glu141. Mg(2+) is bound by residues Asn233 and Asp247. Substrate contacts are provided by residues Asn298 and 355–357 (GIM).

Belongs to the succinate/malate CoA ligase beta subunit family. Heterodimer of an alpha and a beta subunit. Mg(2+) serves as cofactor.

The protein localises to the mitochondrion. The catalysed reaction is succinate + ATP + CoA = succinyl-CoA + ADP + phosphate. It functions in the pathway carbohydrate metabolism; tricarboxylic acid cycle; succinate from succinyl-CoA (ligase route): step 1/1. Succinyl-CoA synthetase functions in the citric acid cycle (TCA), coupling the hydrolysis of succinyl-CoA to the synthesis of ATP and thus represents the only step of substrate-level phosphorylation in the TCA. The beta subunit provides nucleotide specificity of the enzyme and binds the substrate succinate, while the binding sites for coenzyme A and phosphate are found in the alpha subunit. The sequence is that of Succinate--CoA ligase [ADP-forming] subunit beta, mitochondrial from Arabidopsis thaliana (Mouse-ear cress).